The following is a 262-amino-acid chain: Membrane protein US15 (262 aa).

A run of 7 helical transmembrane segments spans residues 46-66 (GAVGWQLAGLTALLSAFCYAA), 77-97 (CLTESSPSLVFVIPVTSVIFI), 108-128 (IGVLLFYTLLHVPPLIVICLC), 133-153 (LVISAALFTLLAFLSCTGVAL), 163-183 (QIVVIHALITLTFTAIVVVIL), 186-206 (GWSWCFKIVLSFSVLITCLAV), and 226-246 (LLAAVKVFLSLVFTLLMVLRI).

Belongs to the HHV-5 US12 protein family.

It is found in the host membrane. In Human cytomegalovirus (strain Merlin) (HHV-5), this protein is Membrane protein US15 (US15).